A 1671-amino-acid polypeptide reads, in one-letter code: DENN domain-containing protein Crag (1671 aa).

The region spanning 39 to 195 (IEPITDIGVY…DVYLCYKKSM (157 aa)) is the MABP domain. The uDENN domain maps to 187–364 (VYLCYKKSMY…DEVPFPAPSI (178 aa)). The cDENN domain maps to 385–521 (PLPRSGAGFH…AARLLRQTLT (137 aa)). Residues 523–632 (LENAKPISYD…ERSFVSDGDH (110 aa)) form the dDENN domain. Disordered stretches follow at residues 997-1160 (QQQQ…PVAS), 1245-1311 (ANST…RLSE), and 1415-1435 (VEES…ANGN). 2 stretches are compositionally biased toward acidic residues: residues 1011–1023 (GDDD…EDEY) and 1050–1061 (YEADEEDEDEVD). Residues 1072-1089 (RVQSPTKISPRTPVTQND) are compositionally biased toward polar residues. Low complexity predominate over residues 1100 to 1119 (AASATPTQETQQEQQHSQSQ). A compositionally biased stretch (polar residues) spans 1136-1147 (RSATFDESTQIG). The segment covering 1254-1277 (NGHHPHGLHHGHHHPHHHHHHHSQ) has biased composition (basic residues). The span at 1281 to 1301 (AEQEEHDAAVHEEGKLRRVSS) shows a compositional bias: basic and acidic residues.

As to quaternary structure, interacts with Cam. Interacts with Rab10. Interacts (via the DENN domains) with Rab11. As to expression, expressed in the adult head and body.

Its subcellular location is the cytoplasm. It is found in the cell cortex. The protein localises to the early endosome. The protein resides in the recycling endosome. It localises to the cytoplasmic granule. Functionally, calmodulin-binding protein that acts as a guanine exchange factor for Rab10 and Rab11. Essential for maintenance of adult photoreceptor cells. Upon light stimulation, required for trafficking of newly synthesized ninaE (Rh1) from the trans-Golgi network to rhabdomere membranes via Rab11-dependent vesicular transport. During egg development, essential for establishing and maintaining epithelial cell polarity by regulating the correct polarized deposition of basal membrane (BM) proteins in follicular epithelial (FE) cells. Functions by targeting Rab10 to the basal cytoplasm, where it restricts the secretion of BM proteins such as trol/Pcan and vkg/Coll IV to the basal surface. Appears to be involved in regulating the levels and distribution of the guanine nucleotide exchange factor strat, however the two proteins appear to have independent roles in regulating polarized BM protein secretion in the FE. This chain is DENN domain-containing protein Crag, found in Drosophila melanogaster (Fruit fly).